A 1330-amino-acid chain; its full sequence is ESX-3 secretion system protein EccC3 (1330 aa).

2 helical membrane-spanning segments follow: residues 43 to 63 (LPYLIGILIVGMIVALVATGM) and 65 to 85 (VISPQTLFFPFVLLLAATALY). FtsK domains are found at residues 456–662 (GEPL…SVSR), 811–1000 (RDPL…RDSN), and 1090–1280 (LAPV…ADSG). ATP is bound by residues 479–486 (GMTGSGKS), 829–836 (GGPKSGKS), and 1107–1114 (GDARSGKT).

As to quaternary structure, part of the ESX-3 / type VII secretion system (T7SS), which is composed of cytosolic and membrane components. The ESX-3 membrane complex is composed of EccB3, EccC3, EccD3 and EccE3.

Its subcellular location is the cell inner membrane. Its function is as follows. Part of the ESX-3 specialized secretion system, which is important for iron and zinc uptake or homeostasis. This is ESX-3 secretion system protein EccC3 from Mycobacterium tuberculosis (strain CDC 1551 / Oshkosh).